The chain runs to 106 residues: Large ribosomal subunit protein eL42 (106 aa).

Belongs to the eukaryotic ribosomal protein eL42 family.

The protein localises to the cytoplasm. The chain is Large ribosomal subunit protein eL42 (RPL44) from Trypanosoma brucei brucei.